The following is a 247-amino-acid chain: Orotidine 5'-phosphate decarboxylase (247 aa).

Residues D21, K43, 70-79, T129, R190, Q199, G219, and R220 each bind substrate; that span reads DMKFHDIPNT. K72 acts as the Proton donor in catalysis.

This sequence belongs to the OMP decarboxylase family. Type 1 subfamily. Homodimer.

The catalysed reaction is orotidine 5'-phosphate + H(+) = UMP + CO2. It functions in the pathway pyrimidine metabolism; UMP biosynthesis via de novo pathway; UMP from orotate: step 2/2. Functionally, catalyzes the decarboxylation of orotidine 5'-monophosphate (OMP) to uridine 5'-monophosphate (UMP). The protein is Orotidine 5'-phosphate decarboxylase of Chromobacterium violaceum (strain ATCC 12472 / DSM 30191 / JCM 1249 / CCUG 213 / NBRC 12614 / NCIMB 9131 / NCTC 9757 / MK).